The sequence spans 321 residues: Geranylgeranyl transferase type-2 subunit beta 1 (321 aa).

An N-acetylserine modification is found at Ser2. PFTB repeat units lie at residues Ala14 to Asp55, Glu62 to Asp103, Ile110 to Lys151, Val158 to Gly199, Lys206 to Asp247, and Lys254 to Glu296. Geranylgeranyl diphosphate-binding positions include His184–Gly186 and Arg226–Lys229. Residues Asp232 and Cys234 each contribute to the Zn(2+) site. Tyr235–Trp238 contributes to the geranylgeranyl diphosphate binding site. His284 is a binding site for Zn(2+).

This sequence belongs to the protein prenyltransferase subunit beta family. Heterotrimer composed of the alpha subunit RGTA, the beta subunit RGTB and REP; within this trimer, RGTA and RGTB form the catalytic component, while REP mediates peptide substrate binding. Requires Zn(2+) as cofactor. Mg(2+) is required as a cofactor.

It catalyses the reaction geranylgeranyl diphosphate + L-cysteinyl-[protein] = S-geranylgeranyl-L-cysteinyl-[protein] + diphosphate. With respect to regulation, the enzymatic reaction requires the aid of the Rab escort protein REP. In terms of biological role, catalyzes the transfer of a geranylgeranyl moiety from geranylgeranyl diphosphate to both cysteines of Rab proteins with the C-terminal sequence -CCXX, CXXX, -XCCX and -XCXC, such as RABA1A, RABA2A, RABF2A and RABG2. Involved in the geranylgeranylation of RABA2A. In vitro, can prenylate PGGTI targets with the C-terminal sequence Cys-aliphatic-aliphatic-X (CaaX) with leucine in the terminal position. Substrates with the C-terminal sequence -CSIL such as ARAC11/ROP1 or GG2/AGG2 are prenylated independently of REP and when the beta subunit is associated with the alpha subunit RGTA1. Required for male fertility and root tip growth. The chain is Geranylgeranyl transferase type-2 subunit beta 1 from Arabidopsis thaliana (Mouse-ear cress).